We begin with the raw amino-acid sequence, 430 residues long: Serine--tRNA ligase (430 aa).

237-239 (TAE) provides a ligand contact to L-serine. 268–270 (RSE) contacts ATP. E291 contacts L-serine. 355-358 (EISS) lines the ATP pocket. An L-serine-binding site is contributed by S391.

It belongs to the class-II aminoacyl-tRNA synthetase family. Type-1 seryl-tRNA synthetase subfamily. Homodimer. The tRNA molecule binds across the dimer.

It localises to the cytoplasm. The enzyme catalyses tRNA(Ser) + L-serine + ATP = L-seryl-tRNA(Ser) + AMP + diphosphate + H(+). It catalyses the reaction tRNA(Sec) + L-serine + ATP = L-seryl-tRNA(Sec) + AMP + diphosphate + H(+). Its pathway is aminoacyl-tRNA biosynthesis; selenocysteinyl-tRNA(Sec) biosynthesis; L-seryl-tRNA(Sec) from L-serine and tRNA(Sec): step 1/1. Functionally, catalyzes the attachment of serine to tRNA(Ser). Is also able to aminoacylate tRNA(Sec) with serine, to form the misacylated tRNA L-seryl-tRNA(Sec), which will be further converted into selenocysteinyl-tRNA(Sec). The protein is Serine--tRNA ligase of Salmonella schwarzengrund (strain CVM19633).